Here is a 445-residue protein sequence, read N- to C-terminus: MTHSVQPTPLQARKSPALQGRVRVPGDKSISHRALILGALSVGETTITGLLEGEDVLNTAKAMQALGAKVERTGEFAWRVNGVGVGGFAQPDAALDFGNSGTGCRLVMGAVAGCPIAATFDGDASLRSRPMKRIVDPLQLMGASVIASAEGGKLPLTLQGAKNPLPIEYRTPVASAQIKSAVLLAGLSAPGVTTVIEQEASRDHTELMLQHFGAQIVSVPEGVHGRKISLTGQPELRGAPVVVPADPSSAAFPMVAALIVPGSDLVLTDVMTNPLRTGLFATLREMGASIEESELRDDAGEPMATFRVRASKLKGVTVPPERAPSMIDEYLVLAVAAAFAEGTTRMRGLQELRVKESDRLEATAAMLRVNGVDVAIEGDDLIVEGRGHVPGGGLVATHMDHRIAMSALVMGLASDQPVQVDDTAFIATSFPDFIPMMRRLGADFA.

Residues Lys28, Ser29, and Arg33 each contribute to the 3-phosphoshikimate site. Residue Lys28 participates in phosphoenolpyruvate binding. Phosphoenolpyruvate-binding residues include Gly101 and Arg129. 3-phosphoshikimate-binding residues include Ser175, Gln177, Asp328, and Lys355. Gln177 provides a ligand contact to phosphoenolpyruvate. The active-site Proton acceptor is Asp328. Arg359 and Arg402 together coordinate phosphoenolpyruvate.

Belongs to the EPSP synthase family. Monomer.

It is found in the cytoplasm. It catalyses the reaction 3-phosphoshikimate + phosphoenolpyruvate = 5-O-(1-carboxyvinyl)-3-phosphoshikimate + phosphate. The protein operates within metabolic intermediate biosynthesis; chorismate biosynthesis; chorismate from D-erythrose 4-phosphate and phosphoenolpyruvate: step 6/7. Its function is as follows. Catalyzes the transfer of the enolpyruvyl moiety of phosphoenolpyruvate (PEP) to the 5-hydroxyl of shikimate-3-phosphate (S3P) to produce enolpyruvyl shikimate-3-phosphate and inorganic phosphate. The protein is 3-phosphoshikimate 1-carboxyvinyltransferase of Rhodopseudomonas palustris (strain BisA53).